The sequence spans 64 residues: Translational regulator CsrA (64 aa).

Belongs to the CsrA/RsmA family. Homodimer; the beta-strands of each monomer intercalate to form a hydrophobic core, while the alpha-helices form wings that extend away from the core.

It localises to the cytoplasm. Its function is as follows. A key translational regulator that binds mRNA to regulate translation initiation and/or mRNA stability. Mediates global changes in gene expression, shifting from rapid growth to stress survival by linking envelope stress, the stringent response and the catabolite repression systems. Usually binds in the 5'-UTR; binding at or near the Shine-Dalgarno sequence prevents ribosome-binding, repressing translation, binding elsewhere in the 5'-UTR can activate translation and/or stabilize the mRNA. Its function is antagonized by small RNA(s). This Methylococcus capsulatus (strain ATCC 33009 / NCIMB 11132 / Bath) protein is Translational regulator CsrA.